Consider the following 234-residue polypeptide: Large ribosomal subunit protein uL1 (234 aa).

Belongs to the universal ribosomal protein uL1 family. In terms of assembly, part of the 50S ribosomal subunit.

Binds directly to 23S rRNA. The L1 stalk is quite mobile in the ribosome, and is involved in E site tRNA release. Its function is as follows. Protein L1 is also a translational repressor protein, it controls the translation of the L11 operon by binding to its mRNA. The chain is Large ribosomal subunit protein uL1 from Sulfurovum sp. (strain NBC37-1).